The primary structure comprises 344 residues: Serine proteinase inhibitor 2 (344 aa).

The protein belongs to the serpin family. Poxviruses subfamily.

It is found in the host cytoplasm. Functionally, viral serpin that inhibits both cysteine and serine proteinases involved in the regulation of host inflammatory and apoptosis processes. Major anti-apoptotic protein which inhibits both intrinsic and extrinsic pathways and strongly cleaves host CASP1 and CASP8 but is a rather poor inhibitor of host CASP3. Prevents the proteolytic activity of host interleukin-1-beta converting enzyme (ICE) and ICE-like enzymes. Can also block apoptosis through host tumor necrosis factor (TNF) receptor. The inhibition of host ICE is an example of a 'cross-class' interaction, in which a serpin inhibits a non-serine proteinase. Also inhibits granzyme B. In Homo sapiens (Human), this protein is Serine proteinase inhibitor 2 (OPG199).